We begin with the raw amino-acid sequence, 307 residues long: Putative oxidoreductase YceM (307 aa).

The protein belongs to the Gfo/Idh/MocA family.

The polypeptide is Putative oxidoreductase YceM (yceM) (Salmonella typhimurium (strain LT2 / SGSC1412 / ATCC 700720)).